The chain runs to 119 residues: NADH dehydrogenase [ubiquinone] 1 subunit C2 (119 aa).

A helical transmembrane segment spans residues 56-75 (GLHRQLLYITAFFFAGYYLV).

Belongs to the complex I NDUFC2 subunit family. As to quaternary structure, complex I is composed of 45 different subunits. Interacts with TMEM242.

It localises to the mitochondrion inner membrane. Functionally, accessory subunit of the mitochondrial membrane respiratory chain NADH dehydrogenase (Complex I), that is believed not to be involved in catalysis but required for the complex assembly. Complex I functions in the transfer of electrons from NADH to the respiratory chain. The immediate electron acceptor for the enzyme is believed to be ubiquinone. This chain is NADH dehydrogenase [ubiquinone] 1 subunit C2, found in Pongo pygmaeus (Bornean orangutan).